A 143-amino-acid polypeptide reads, in one-letter code: Transcriptional regulator MraZ (143 aa).

SpoVT-AbrB domains follow at residues 5 to 47 and 76 to 119; these read EYRH…PQVE and ATEC…SKEL.

This sequence belongs to the MraZ family. As to quaternary structure, forms oligomers.

It is found in the cytoplasm. The protein localises to the nucleoid. This is Transcriptional regulator MraZ from Halalkalibacterium halodurans (strain ATCC BAA-125 / DSM 18197 / FERM 7344 / JCM 9153 / C-125) (Bacillus halodurans).